We begin with the raw amino-acid sequence, 140 residues long: Encapsulated ferritin-like protein (140 aa).

Position 31 (Glu-31) interacts with Ca(2+). Glu-32 serves as a coordination point for Fe cation. Position 34 (Glu-34) interacts with Ca(2+). 2 residues coordinate Fe cation: Glu-62 and His-65. A disordered region spans residues 100-140; that stretch reads ADTAGEGSGGDAAKGATAQGDGSLGIGSLKGEAALARPPRL. Positions 100-140 are targeting peptide; it reads ADTAGEGSGGDAAKGATAQGDGSLGIGSLKGEAALARPPRL.

It belongs to the ferritin-like superfamily. EncFtn family. In terms of assembly, monomers form antiparallel dimers which assemble in a decameric ring 7 nm in diameter and 4.5 nm thick with a central channel (construct without targeting peptide). Growth in Fe(2+)-rich medium induces oligomerization, the monomer does not bind metals. The target peptide probably extends away from the ring, to allow binding to the interior of the encapsulin nanocompartment shell. Fe(2+) serves as cofactor. Ca(2+) is required as a cofactor.

The protein resides in the encapsulin nanocompartment. The catalysed reaction is 4 Fe(2+) + O2 + 4 H(+) = 4 Fe(3+) + 2 H2O. With respect to regulation, ferroxidase activity inhibited by Zn(2+). Mutants at Glu-31, Glu-34 and Trp-38 are also inhibited by Zn(2+). Functionally, cargo protein of a type 1 encapsulin nanocompartment. A ferritin-like ferroxidase that mineralizes iron inside the encapsulin nanocompartment. Converts Fe(2+) to Fe(3+) that is released to the exterior of the decameric complex for deposition in the encapsulin nanocompartment. In solution the decamer binds 10-15 iron cations; in the encapsulin nanocompartment the decamer can bind up to 48 ions, perhaps via its internal channel and on its exterior. The empty encapsulin nanocompartment sequesters about 2200 Fe ions while the cargo-loaded nanocompartment can maximally sequester about 4150 Fe ions. EncFtn retains ferroxidase activity when encapsulated. Flux in the active site di-iron metal center is thought to be controlled by the 'entry site' of the protein, which both attracts metal and controls the rate of iron oxidation. Encapsulation in the nanocompartment does not alter either function of this protein. The polypeptide is Encapsulated ferritin-like protein (Rhodospirillum rubrum (strain ATCC 11170 / ATH 1.1.1 / DSM 467 / LMG 4362 / NCIMB 8255 / S1)).